We begin with the raw amino-acid sequence, 476 residues long: Aspartyl/glutamyl-tRNA(Asn/Gln) amidotransferase subunit B (476 aa).

Belongs to the GatB/GatE family. GatB subfamily. As to quaternary structure, heterotrimer of A, B and C subunits.

The enzyme catalyses L-glutamyl-tRNA(Gln) + L-glutamine + ATP + H2O = L-glutaminyl-tRNA(Gln) + L-glutamate + ADP + phosphate + H(+). It carries out the reaction L-aspartyl-tRNA(Asn) + L-glutamine + ATP + H2O = L-asparaginyl-tRNA(Asn) + L-glutamate + ADP + phosphate + 2 H(+). Allows the formation of correctly charged Asn-tRNA(Asn) or Gln-tRNA(Gln) through the transamidation of misacylated Asp-tRNA(Asn) or Glu-tRNA(Gln) in organisms which lack either or both of asparaginyl-tRNA or glutaminyl-tRNA synthetases. The reaction takes place in the presence of glutamine and ATP through an activated phospho-Asp-tRNA(Asn) or phospho-Glu-tRNA(Gln). This Lacticaseibacillus paracasei (strain ATCC 334 / BCRC 17002 / CCUG 31169 / CIP 107868 / KCTC 3260 / NRRL B-441) (Lactobacillus paracasei) protein is Aspartyl/glutamyl-tRNA(Asn/Gln) amidotransferase subunit B.